A 784-amino-acid chain; its full sequence is Ubiquitin carboxyl-terminal hydrolase 1 (784 aa).

2 disordered regions span residues 1-21 (MPGVIPSESNGLSRGSPSKKN) and 33-54 (TKRALDFTDSQEDEEKASEYRG). Over residues 7 to 16 (SESNGLSRGS) the composition is skewed to polar residues. Phosphoserine occurs at positions 16, 42, and 67. Residues 81-784 (VGLNNLGNTC…TPYLLFYKKL (704 aa)) form the USP domain. Cys-90 (nucleophile) is an active-site residue. Basic and acidic residues-rich tracts occupy residues 232-243 (KVEEKSLQKEET) and 252-264 (DSTRNLDDLKEQL). 2 disordered regions span residues 232 to 341 (KVEE…KINW) and 363 to 411 (TNQR…SSEA). Positions 389–407 (NTVNGSGPASPGSSVTPVD) are enriched in polar residues. The residue at position 475 (Ser-475) is a Phosphoserine. The active-site Proton acceptor is His-593. A disordered region spans residues 686-723 (PEKVVGTPFTDSRNSETNDTNGTQESDRSKESSDQTGI). Polar residues predominate over residues 694 to 709 (FTDSRNSETNDTNGTQ). At Ser-767 the chain carries Phosphoserine.

This sequence belongs to the peptidase C19 family. Interacts with FANCD2 and PCNA. Interacts with WDR48. Interacts with ATAD5; the interaction regulates USP1-mediated PCNA deubiquitination. Post-translationally, autocatalytic cleavage of USP1 following UV irradiation inactivates it, leading to an increase in ubiquitinated PCNA, recruitment of POLH and translesion synthesis. In terms of processing, ubiquitinated by the CRL2(KLHDC2) complex following autocatalytic cleavage, leading to its degradation: the CRL2(KLHDC2) complex recognizes the diglycine (Gly-Gly) at the C-terminus.

Its subcellular location is the nucleus. The catalysed reaction is Thiol-dependent hydrolysis of ester, thioester, amide, peptide and isopeptide bonds formed by the C-terminal Gly of ubiquitin (a 76-residue protein attached to proteins as an intracellular targeting signal).. In terms of biological role, negative regulator of DNA damage repair which specifically deubiquitinates monoubiquitinated FANCD2. Also involved in PCNA-mediated translesion synthesis (TLS) by deubiquitinating monoubiquitinated PCNA. Has almost no deubiquitinating activity by itself and requires the interaction with WDR48 to have a high activity. In Rattus norvegicus (Rat), this protein is Ubiquitin carboxyl-terminal hydrolase 1.